The sequence spans 170 residues: Tachykinin-4 (170 aa).

An N-terminal signal peptide occupies residues 1-16 (MLPLLALFLLIGPAVS). The propeptide occupies 17-54 (TTTRDREDLTFGAEAESWVTVNLKGIPVPSIELKLQEL). Met66 carries the methionine amide modification. A propeptide spanning residues 67–170 (GKRVEGVHPI…SQMMPRPSRP (104 aa)) is cleaved from the precursor. The disordered stretch occupies residues 107-170 (QETNHQSAGP…SQMMPRPSRP (64 aa)). The segment covering 123–140 (SLQSQRGRSEPPNHQQHV) has biased composition (polar residues).

The protein belongs to the tachykinin family.

Its subcellular location is the secreted. Functionally, tachykinins are active peptides which excite neurons, evoke behavioral responses, are potent vasodilators and secretagogues, and contract (directly or indirectly) many smooth muscles. Hemokinin induces plasma extravasation, mast cell degranulation, muscle contraction, salivary secretion and scratching behavior. Increases sperm motility. Induces potent analgesic effects and may play a role in pain modulation. Promotes survival of bone marrow B lineage cells and of cultured LPS-stimulated pre-B cells and may act as an autocrine factor required for B-cell survival and proliferation. Lowers systemic arterial pressure following intravenous injection. Induces interferon-gamma production and may play a role in the inflammatory response. Shows potent affinity and specificity for the NK-1 receptor. In Rattus norvegicus (Rat), this protein is Tachykinin-4.